A 124-amino-acid chain; its full sequence is UPF0337 protein blr1496 (124 aa).

Belongs to the UPF0337 (CsbD) family.

This Bradyrhizobium diazoefficiens (strain JCM 10833 / BCRC 13528 / IAM 13628 / NBRC 14792 / USDA 110) protein is UPF0337 protein blr1496.